The following is a 311-amino-acid chain: Energy-coupling factor transporter ATP-binding protein EcfA2 (311 aa).

An ABC transporter domain is found at 3–265 (IKLKDVKFTF…IAFLEENNLQ (263 aa)). Residue 40 to 47 (GQTGSGKT) participates in ATP binding.

It belongs to the ABC transporter superfamily. Energy-coupling factor EcfA family. As to quaternary structure, forms a stable energy-coupling factor (ECF) transporter complex composed of 2 membrane-embedded substrate-binding proteins (S component), 2 ATP-binding proteins (A component) and 2 transmembrane proteins (T component).

It is found in the cell membrane. Functionally, ATP-binding (A) component of a common energy-coupling factor (ECF) ABC-transporter complex. Unlike classic ABC transporters this ECF transporter provides the energy necessary to transport a number of different substrates. The chain is Energy-coupling factor transporter ATP-binding protein EcfA2 from Mycoplasmopsis synoviae (strain 53) (Mycoplasma synoviae).